Here is a 356-residue protein sequence, read N- to C-terminus: GATA zinc finger domain-containing protein 17 (356 aa).

Positions 91–119 form a coiled coil; it reads LKEFDALEASLNAELECLELQYSSDTSEL. The span at 158–188 shows a compositional bias: low complexity; sequence TASTSTSTPTNTTTTTTTTSNSLTKNNNSAL. Residues 158–294 form a disordered region; that stretch reads TASTSTSTPT…DITEESKVKE (137 aa). The segment covering 206–228 has biased composition (acidic residues); that stretch reads SSDDEEDDQKDDQDKDDSDEDNV. Over residues 260–284 the composition is skewed to low complexity; the sequence is TAITTTTTPITTTDSNIIGTTTTTD. The GATA-type zinc finger occupies 304 to 331; that stretch reads CYVCKVTETPYWRRGTDNGVVVDLCNEC.

This Dictyostelium discoideum (Social amoeba) protein is GATA zinc finger domain-containing protein 17 (gtaQ).